Here is a 428-residue protein sequence, read N- to C-terminus: 3-phosphoshikimate 1-carboxyvinyltransferase (428 aa).

Positions 22, 23, and 27 each coordinate 3-phosphoshikimate. A phosphoenolpyruvate-binding site is contributed by K22. Phosphoenolpyruvate contacts are provided by G96 and R124. Residues S170, S171, Q172, S198, D314, N337, and K341 each contribute to the 3-phosphoshikimate site. Q172 contributes to the phosphoenolpyruvate binding site. Residue D314 is the Proton acceptor of the active site. Residues R345, R387, and K412 each coordinate phosphoenolpyruvate.

This sequence belongs to the EPSP synthase family. As to quaternary structure, monomer.

Its subcellular location is the cytoplasm. It carries out the reaction 3-phosphoshikimate + phosphoenolpyruvate = 5-O-(1-carboxyvinyl)-3-phosphoshikimate + phosphate. It participates in metabolic intermediate biosynthesis; chorismate biosynthesis; chorismate from D-erythrose 4-phosphate and phosphoenolpyruvate: step 6/7. In terms of biological role, catalyzes the transfer of the enolpyruvyl moiety of phosphoenolpyruvate (PEP) to the 5-hydroxyl of shikimate-3-phosphate (S3P) to produce enolpyruvyl shikimate-3-phosphate and inorganic phosphate. This Photobacterium profundum (strain SS9) protein is 3-phosphoshikimate 1-carboxyvinyltransferase.